Here is a 395-residue protein sequence, read N- to C-terminus: Protochlorophyllide reductase B, chloroplastic (395 aa).

A chloroplast-targeting transit peptide spans 1–59 (MALQAATSFLPSALSARKEGAAKDSAFFGVRLADGLKLDATSLGLRTKRVNTSSVAIRA).

Belongs to the short-chain dehydrogenases/reductases (SDR) family. POR subfamily.

The protein resides in the plastid. It localises to the chloroplast. It carries out the reaction chlorophyllide a + NADP(+) = protochlorophyllide a + NADPH + H(+). It functions in the pathway porphyrin-containing compound metabolism; chlorophyll biosynthesis. Its function is as follows. Phototransformation of protochlorophyllide (Pchlide) to chlorophyllide (Chlide). The sequence is that of Protochlorophyllide reductase B, chloroplastic (PORB) from Hordeum vulgare (Barley).